The sequence spans 86 residues: Small ribosomal subunit protein bS18 (86 aa).

The protein belongs to the bacterial ribosomal protein bS18 family. As to quaternary structure, part of the 30S ribosomal subunit. Forms a tight heterodimer with protein bS6.

Binds as a heterodimer with protein bS6 to the central domain of the 16S rRNA, where it helps stabilize the platform of the 30S subunit. This Campylobacter jejuni subsp. jejuni serotype O:6 (strain 81116 / NCTC 11828) protein is Small ribosomal subunit protein bS18.